Consider the following 876-residue polypeptide: Eukaryotic translation initiation factor 3 subunit C (876 aa).

2 disordered regions span residues 1–25 and 154–233; these read MSRF…VVRA and SXFR…IREQ. Positions 11–20 are enriched in acidic residues; it reads SESESSSEDE. Basic and acidic residues-rich tracts occupy residues 154 to 172 and 182 to 192; these read SXFR…KDSS and KPIKEKPKPEP. Over residues 206–219 the composition is skewed to low complexity; the sequence is SMDWASSSSDSSFS. The 177-residue stretch at 632 to 808 folds into the PCI domain; that stretch reads FHMHINLELL…ECAILHRSEP (177 aa). The tract at residues 839–876 is disordered; sequence FFQRGGAQRGEGRQRERPREGWNRRTRNRRRDDERADD. The segment covering 848-861 has biased composition (basic and acidic residues); the sequence is GEGRQRERPREGWN.

Belongs to the eIF-3 subunit C family. As to quaternary structure, component of the eukaryotic translation initiation factor 3 (eIF-3) complex.

It localises to the cytoplasm. Functionally, component of the eukaryotic translation initiation factor 3 (eIF-3) complex, which is involved in protein synthesis of a specialized repertoire of mRNAs and, together with other initiation factors, stimulates binding of mRNA and methionyl-tRNAi to the 40S ribosome. The eIF-3 complex specifically targets and initiates translation of a subset of mRNAs involved in cell proliferation. This Bombyx mori (Silk moth) protein is Eukaryotic translation initiation factor 3 subunit C.